The chain runs to 1402 residues: DNA-directed RNA polymerase subunit beta' (1402 aa).

Zn(2+) is bound by residues C71, C73, C86, and C89. D462, D464, and D466 together coordinate Mg(2+). The Zn(2+) site is built by C811, C885, C892, and C895.

This sequence belongs to the RNA polymerase beta' chain family. In terms of assembly, the RNAP catalytic core consists of 2 alpha, 1 beta, 1 beta' and 1 omega subunit. When a sigma factor is associated with the core the holoenzyme is formed, which can initiate transcription. Mg(2+) is required as a cofactor. It depends on Zn(2+) as a cofactor.

The catalysed reaction is RNA(n) + a ribonucleoside 5'-triphosphate = RNA(n+1) + diphosphate. DNA-dependent RNA polymerase catalyzes the transcription of DNA into RNA using the four ribonucleoside triphosphates as substrates. The polypeptide is DNA-directed RNA polymerase subunit beta' (Rhizobium johnstonii (strain DSM 114642 / LMG 32736 / 3841) (Rhizobium leguminosarum bv. viciae)).